The chain runs to 58 residues: Temporin-1Th (58 aa).

The N-terminal stretch at 1–22 is a signal peptide; sequence MFTLKKSLLLLFFLGTINLSLC. A propeptide spanning residues 23 to 46 is cleaved from the precursor; the sequence is EEERNAEEERRDEPDERDVQVEKR. Residues 25–46 are disordered; it reads ERNAEEERRDEPDERDVQVEKR. Residue leucine 56 is modified to Leucine amide.

Expressed by the skin glands.

The protein localises to the secreted. Antimicrobial peptide that renders both the outer and inner membrane of bacteria permeable to hydrophobic substances of low molecular mass. The polypeptide is Temporin-1Th (Rana temporaria (European common frog)).